The sequence spans 215 residues: Cytochrome b6 (215 aa).

A helical membrane pass occupies residues 32-52 (IFYCLGGITLTCFLIQFATGF). Cys-35 contributes to the heme c binding site. His-86 and His-100 together coordinate heme b. A run of 3 helical transmembrane segments spans residues 90–110 (ASMMVLMMILHVFRVYLTGGF), 116–136 (LTWVTGVVMAVITVTFGVTGY), and 186–206 (LHTFVLPWLIAVFMLLHFLMI). Heme b contacts are provided by His-187 and His-202.

It belongs to the cytochrome b family. PetB subfamily. In terms of assembly, the 4 large subunits of the cytochrome b6-f complex are cytochrome b6, subunit IV (17 kDa polypeptide, PetD), cytochrome f and the Rieske protein, while the 4 small subunits are PetG, PetL, PetM and PetN. The complex functions as a dimer. Heme b is required as a cofactor. Heme c serves as cofactor.

It is found in the cellular thylakoid membrane. Component of the cytochrome b6-f complex, which mediates electron transfer between photosystem II (PSII) and photosystem I (PSI), cyclic electron flow around PSI, and state transitions. This chain is Cytochrome b6, found in Synechococcus elongatus (strain ATCC 33912 / PCC 7942 / FACHB-805) (Anacystis nidulans R2).